Here is a 439-residue protein sequence, read N- to C-terminus: Tol-Pal system protein TolB (439 aa).

The first 22 residues, 1–22, serve as a signal peptide directing secretion; sequence MTKFPRWLAMLVGLLFPLSALT.

Belongs to the TolB family. The Tol-Pal system is composed of five core proteins: the inner membrane proteins TolA, TolQ and TolR, the periplasmic protein TolB and the outer membrane protein Pal. They form a network linking the inner and outer membranes and the peptidoglycan layer.

The protein localises to the periplasm. Part of the Tol-Pal system, which plays a role in outer membrane invagination during cell division and is important for maintaining outer membrane integrity. The protein is Tol-Pal system protein TolB of Xylella fastidiosa (strain 9a5c).